Reading from the N-terminus, the 465-residue chain is GTPase Der (465 aa).

EngA-type G domains follow at residues phenylalanine 3–phenylalanine 166 and isoleucine 184–asparagine 358. GTP is bound by residues glycine 9–serine 16, aspartate 56–isoleucine 60, asparagine 118–aspartate 121, glycine 190–serine 197, aspartate 237–valine 241, and asparagine 302–aspartate 305. The KH-like domain occupies lysine 359–glutamate 443.

The protein belongs to the TRAFAC class TrmE-Era-EngA-EngB-Septin-like GTPase superfamily. EngA (Der) GTPase family. In terms of assembly, associates with the 50S ribosomal subunit.

Its function is as follows. GTPase that plays an essential role in the late steps of ribosome biogenesis. The chain is GTPase Der from Francisella philomiragia subsp. philomiragia (strain ATCC 25017 / CCUG 19701 / FSC 153 / O#319-036).